Here is a 524-residue protein sequence, read N- to C-terminus: Cytochrome P450 4F11 (524 aa).

Residues 15 to 37 form a helical membrane-spanning segment; it reads AASPWLLLLLVGGSWLLARVLAW. A 4-hydroxynonenal-conjugated cysteine mark is found at Cys45 and Cys260. At His261 the chain carries 4-hydroxynonenal-conjugated histidine. Glu328 is a binding site for heme. His347 carries the post-translational modification 4-hydroxynonenal-conjugated histidine. Cys354 carries the post-translational modification 4-hydroxynonenal-conjugated cysteine. Lys451 bears the 4-hydroxynonenal-conjugated lysine mark. Cys468 is a binding site for heme.

This sequence belongs to the cytochrome P450 family. The cofactor is heme. In terms of processing, 4-hydroxynonenal conjugation impairs substrate binding and the long-chain fatty acid omega-monooxygenase activity. Expressed mainly in human liver, followed by kidney, heart, and skeletal muscle.

It is found in the endoplasmic reticulum membrane. The protein resides in the microsome membrane. It catalyses the reaction an organic molecule + reduced [NADPH--hemoprotein reductase] + O2 = an alcohol + oxidized [NADPH--hemoprotein reductase] + H2O + H(+). The enzyme catalyses an omega-methyl-long-chain fatty acid + reduced [NADPH--hemoprotein reductase] + O2 = an omega-hydroxy-long-chain fatty acid + oxidized [NADPH--hemoprotein reductase] + H2O + H(+). It carries out the reaction dodecanoate + reduced [NADPH--hemoprotein reductase] + O2 = 12-hydroxydodecanoate + oxidized [NADPH--hemoprotein reductase] + H2O + H(+). The catalysed reaction is hexadecanoate + reduced [NADPH--hemoprotein reductase] + O2 = 16-hydroxyhexadecanoate + oxidized [NADPH--hemoprotein reductase] + H2O + H(+). It catalyses the reaction (9Z)-octadecenoate + reduced [NADPH--hemoprotein reductase] + O2 = 18-hydroxy-(9Z)-octadecenoate + oxidized [NADPH--hemoprotein reductase] + H2O + H(+). The enzyme catalyses (5Z,8Z,11Z,14Z)-eicosatetraenoate + reduced [NADPH--hemoprotein reductase] + O2 = 20-hydroxy-(5Z,8Z,11Z,14Z)-eicosatetraenoate + oxidized [NADPH--hemoprotein reductase] + H2O + H(+). It carries out the reaction (4Z,7Z,10Z,13Z,16Z,19Z)-docosahexaenoate + reduced [NADPH--hemoprotein reductase] + O2 = 22-hydroxy-(4Z,7Z,10Z,13Z,16Z,19Z)-docosahexaenoate + oxidized [NADPH--hemoprotein reductase] + H2O + H(+). The catalysed reaction is 8-hydroxy-(5Z,9E,11Z,14Z)-eicosatetraenoate + reduced [NADPH--hemoprotein reductase] + O2 = 8,20-dihydroxy-(5Z,9E,11Z,14Z)-eicosatetraenoate + oxidized [NADPH--hemoprotein reductase] + H2O + H(+). It catalyses the reaction 3-hydroxyhexadecanoate + reduced [NADPH--hemoprotein reductase] + O2 = 3,16-dihydroxyhexadecanoate + oxidized [NADPH--hemoprotein reductase] + H2O + H(+). The enzyme catalyses 3-hydroxyoctadecanoate + reduced [NADPH--hemoprotein reductase] + O2 = 3,18-dihydroxyoctadecanoate + oxidized [NADPH--hemoprotein reductase] + H2O + H(+). It carries out the reaction phylloquinone + reduced [NADPH--hemoprotein reductase] + O2 = omega-hydroxyphylloquinone + oxidized [NADPH--hemoprotein reductase] + H2O + H(+). The catalysed reaction is menaquinone-4 + reduced [NADPH--hemoprotein reductase] + O2 = omega-hydroxymenaquinone-4 + oxidized [NADPH--hemoprotein reductase] + H2O + H(+). It catalyses the reaction 2-hexyl-5-pentylresorcinol + reduced [NADPH--hemoprotein reductase] + O2 = 2-hexyl-5-(5-hydroxypentyl)resorcinol + oxidized [NADPH--hemoprotein reductase] + H2O + H(+). The enzyme catalyses 2-hexyl-5-heptylresorcinol + reduced [NADPH--hemoprotein reductase] + O2 = 2-hexyl-5-(7-hydroxyheptyl)resorcinol + oxidized [NADPH--hemoprotein reductase] + H2O + H(+). It carries out the reaction 12-hydroxy-(5Z,8Z,10E,14Z)-eicosatetraenoate + reduced [NADPH--hemoprotein reductase] + O2 = 12,20-dihydroxy-(5Z,8Z,10E,14Z)-eicosatetraenoate + oxidized [NADPH--hemoprotein reductase] + H2O + H(+). The catalysed reaction is 15-hydroxy-(5Z,8Z,11Z,13E)-eicosatetraenoate + reduced [NADPH--hemoprotein reductase] + O2 = 15,20-dihydroxy-(5Z,8Z,11Z,13E)-eicosatetraenoate + oxidized [NADPH--hemoprotein reductase] + H2O + H(+). It participates in lipid metabolism; arachidonate metabolism. Its pathway is lipid metabolism; oxylipin biosynthesis. It functions in the pathway cofactor degradation; phylloquinone degradation. The protein operates within xenobiotic degradation. With respect to regulation, inhibition of the long-chain fatty acid omega-monooxygenase activity by 4-hydroxynonenal (4-HNE) conjugation. Its function is as follows. A cytochrome P450 monooxygenase involved in the metabolism of various endogenous substrates, including fatty acids and their oxygenated derivatives (oxylipins). Mechanistically, uses molecular oxygen inserting one oxygen atom into a substrate, and reducing the second into a water molecule, with two electrons provided by NADPH via cytochrome P450 reductase (CPR; NADPH-ferrihemoprotein reductase). Catalyzes with high efficiency the oxidation of the terminal carbon (omega-oxidation) of 3-hydroxy fatty acids, such as 3-hydroxyhexadecanoic and 3-hydroxyoctadecanoic acids, likely participating in the biosynthesis of long-chain 3-hydroxydicarboxylic acids. Omega-hydroxylates and inactivates phylloquinone (vitamin K1), and menaquinone-4 (MK-4, a form of vitamin K2), both acting as cofactors in blood coagulation. Metabolizes with low efficiciency fatty acids, including (5Z,8Z,11Z,14Z)-eicosatetraenoic acid (arachidonate) and its oxygenated metabolite 8-hydroxyeicosatetraenoic acid (8-HETE). Catalyzes N- and O-demethylation of drugs such as erythromycin, benzphetamine, ethylmorphine, chlorpromazine, imipramine and verapamil. Catalyzes the oxidation of dialkylresorcinol 2. This chain is Cytochrome P450 4F11, found in Homo sapiens (Human).